The following is a 181-amino-acid chain: Endoribonuclease YbeY (181 aa).

Zn(2+) is bound by residues His-115, His-119, and His-125.

This sequence belongs to the endoribonuclease YbeY family. Zn(2+) serves as cofactor.

The protein resides in the cytoplasm. In terms of biological role, single strand-specific metallo-endoribonuclease involved in late-stage 70S ribosome quality control and in maturation of the 3' terminus of the 16S rRNA. The protein is Endoribonuclease YbeY of Bifidobacterium adolescentis (strain ATCC 15703 / DSM 20083 / NCTC 11814 / E194a).